Reading from the N-terminus, the 44-residue chain is Cytochrome b559 subunit beta (44 aa).

A helical membrane pass occupies residues 19-35 (WLAIHGLAIPTVFFLGA). Heme is bound at residue His23.

The protein belongs to the PsbE/PsbF family. In terms of assembly, heterodimer of an alpha subunit and a beta subunit. PSII is composed of 1 copy each of membrane proteins PsbA, PsbB, PsbC, PsbD, PsbE, PsbF, PsbH, PsbI, PsbJ, PsbK, PsbL, PsbM, PsbT, PsbX, PsbY, PsbZ, Psb30/Ycf12, at least 3 peripheral proteins of the oxygen-evolving complex and a large number of cofactors. It forms dimeric complexes. It depends on heme b as a cofactor.

It is found in the plastid. It localises to the chloroplast thylakoid membrane. In terms of biological role, this b-type cytochrome is tightly associated with the reaction center of photosystem II (PSII). PSII is a light-driven water:plastoquinone oxidoreductase that uses light energy to abstract electrons from H(2)O, generating O(2) and a proton gradient subsequently used for ATP formation. It consists of a core antenna complex that captures photons, and an electron transfer chain that converts photonic excitation into a charge separation. This chain is Cytochrome b559 subunit beta, found in Porphyra purpurea (Red seaweed).